The chain runs to 357 residues: 3-isopropylmalate dehydrogenase (357 aa).

Residues R99, R109, R133, and D223 each contribute to the substrate site. Mg(2+) contacts are provided by D223, D247, and D251. Position 283–295 (283–295 (GSAPDIAGEQRAD)) interacts with NAD(+).

Belongs to the isocitrate and isopropylmalate dehydrogenases family. LeuB type 2 subfamily. In terms of assembly, homodimer. The cofactor is Mg(2+). Requires Mn(2+) as cofactor.

The protein resides in the cytoplasm. It catalyses the reaction (2R,3S)-3-isopropylmalate + NAD(+) = 4-methyl-2-oxopentanoate + CO2 + NADH. The protein operates within amino-acid biosynthesis; L-leucine biosynthesis; L-leucine from 3-methyl-2-oxobutanoate: step 3/4. Its function is as follows. Catalyzes the oxidation of 3-carboxy-2-hydroxy-4-methylpentanoate (3-isopropylmalate) to 3-carboxy-4-methyl-2-oxopentanoate. The product decarboxylates to 4-methyl-2 oxopentanoate. The polypeptide is 3-isopropylmalate dehydrogenase (Leifsonia xyli subsp. xyli (strain CTCB07)).